The sequence spans 190 residues: MSEQKTLSVQKRDNLGKGANRRLRSEEVVPGVFYDTKGNNVAVQMPAKPLQKLFEEVGRTTVFQLEIEEEGKKSTHPVLIWDALFHPYKKKFTHIDFFGVDLDREIKIRVPLEFVGTSRGVKLGGKLEVYREFIDVMSKPLTLPKKITLDLTELDINSTIMLKDVAMPEGVRPATNENFAILSVLTPKSE.

The interval 1-20 is disordered; the sequence is MSEQKTLSVQKRDNLGKGAN.

Belongs to the bacterial ribosomal protein bL25 family. CTC subfamily. In terms of assembly, part of the 50S ribosomal subunit; part of the 5S rRNA/L5/L18/L25 subcomplex. Contacts the 5S rRNA. Binds to the 5S rRNA independently of L5 and L18.

Functionally, this is one of the proteins that binds to the 5S RNA in the ribosome where it forms part of the central protuberance. The chain is Large ribosomal subunit protein bL25 from Nitratidesulfovibrio vulgaris (strain ATCC 29579 / DSM 644 / CCUG 34227 / NCIMB 8303 / VKM B-1760 / Hildenborough) (Desulfovibrio vulgaris).